The chain runs to 438 residues: Adenosylhomocysteinase (438 aa).

Substrate is bound by residues Thr-64, Asp-139, and Glu-164. An NAD(+)-binding site is contributed by 165–167; it reads TTT. 2 residues coordinate substrate: Lys-194 and Asp-198. Residues Asn-199, 228-233, Glu-251, Asn-286, 307-309, and Asn-352 each bind NAD(+); these read GYGDVG and IGH.

This sequence belongs to the adenosylhomocysteinase family. NAD(+) serves as cofactor.

The protein resides in the cytoplasm. The enzyme catalyses S-adenosyl-L-homocysteine + H2O = L-homocysteine + adenosine. Its pathway is amino-acid biosynthesis; L-homocysteine biosynthesis; L-homocysteine from S-adenosyl-L-homocysteine: step 1/1. In terms of biological role, may play a key role in the regulation of the intracellular concentration of adenosylhomocysteine. This chain is Adenosylhomocysteinase, found in Coxiella burnetii (strain CbuK_Q154) (Coxiella burnetii (strain Q154)).